A 180-amino-acid chain; its full sequence is Protein SPO16 homolog (180 aa).

As to quaternary structure, homooligomer. Interacts with SHOC, SYCP1 and SYCE3.

The protein localises to the chromosome. In terms of biological role, plays a key role in reinforcing the integrity of the central element of the synaptonemal complex (SC) thereby stabilizing SC, ensuring progression of meiotic prophase I in male and female germ cells. Promotes homologous recombination and crossing-over in meiotic prophase I via its association with SHOC1. Required for the localization of TEX11 and MSH4 to recombination intermediates. The chain is Protein SPO16 homolog from Homo sapiens (Human).